Consider the following 287-residue polypeptide: Protease HtpX (287 aa).

Transmembrane regions (helical) follow at residues 4 to 24 and 33 to 53; these read IFLL…VMSI and GGLL…SLAI. Residue H139 coordinates Zn(2+). E140 is a catalytic residue. H143 is a binding site for Zn(2+). Helical transmembrane passes span 154–174 and 195–215; these read LIQG…AGII and AVVF…VAYF. Residue E220 coordinates Zn(2+).

The protein belongs to the peptidase M48B family. Zn(2+) serves as cofactor.

It localises to the cell inner membrane. This chain is Protease HtpX, found in Shewanella oneidensis (strain ATCC 700550 / JCM 31522 / CIP 106686 / LMG 19005 / NCIMB 14063 / MR-1).